A 200-amino-acid polypeptide reads, in one-letter code: 3-isopropylmalate dehydratase small subunit (200 aa).

This sequence belongs to the LeuD family. LeuD type 1 subfamily. Heterodimer of LeuC and LeuD.

It catalyses the reaction (2R,3S)-3-isopropylmalate = (2S)-2-isopropylmalate. It participates in amino-acid biosynthesis; L-leucine biosynthesis; L-leucine from 3-methyl-2-oxobutanoate: step 2/4. In terms of biological role, catalyzes the isomerization between 2-isopropylmalate and 3-isopropylmalate, via the formation of 2-isopropylmaleate. The polypeptide is 3-isopropylmalate dehydratase small subunit (Photobacterium profundum (strain SS9)).